Reading from the N-terminus, the 279-residue chain is MTKADLLFKDNITKIMSEGVFSEQARPRYKNGEMANSKYITGAFAEYDLSKGEFPITTLRPIPIKSAIKEIFWIYQDQTNDLVVLNDKYGVTYWNDWEVGHTGTIGQRYGAVVKKHNIISKLLKQLEDNPWNRRNVISLWDYEAFEETEGLLPCAFQTMFDVRRVNGELYLDATLTQRSNDMLVAHHINAMQYVALQMMIAKHFGWRVGKFFYFINNLHIYDNQFEQAQELLKRQPSECNPKLVLNVPDGTDFFDIKPDDFALVDYDPIKPQLRFDLAI.

Position 133-134 (R133–R134) interacts with dUMP. The active-site Nucleophile is the C154. DUMP-binding positions include R178 to D181, N189, and H219 to Y221. Residue D181 coordinates (6R)-5,10-methylene-5,6,7,8-tetrahydrofolate. (6R)-5,10-methylene-5,6,7,8-tetrahydrofolate is bound at residue A278.

The protein belongs to the thymidylate synthase family. Bacterial-type ThyA subfamily. In terms of assembly, homodimer.

The protein localises to the cytoplasm. It catalyses the reaction dUMP + (6R)-5,10-methylene-5,6,7,8-tetrahydrofolate = 7,8-dihydrofolate + dTMP. It functions in the pathway pyrimidine metabolism; dTTP biosynthesis. Catalyzes the reductive methylation of 2'-deoxyuridine-5'-monophosphate (dUMP) to 2'-deoxythymidine-5'-monophosphate (dTMP) while utilizing 5,10-methylenetetrahydrofolate (mTHF) as the methyl donor and reductant in the reaction, yielding dihydrofolate (DHF) as a by-product. This enzymatic reaction provides an intracellular de novo source of dTMP, an essential precursor for DNA biosynthesis. This chain is Thymidylate synthase, found in Streptococcus agalactiae serotype Ia (strain ATCC 27591 / A909 / CDC SS700).